The chain runs to 137 residues: MLQPKRTKYRKQFKGRIKGVAKGGFDLAFGEFGLKALEPNRVNAREIEAARRAITRYMKRAGRVWIRVFPDVPVTAKPTEVRMGKGKGSVEYWACKVKPGRMMFEIDGVSEEIAREALRLGSAKLSVKTRFVQRIAE.

The protein belongs to the universal ribosomal protein uL16 family. As to quaternary structure, part of the 50S ribosomal subunit.

Binds 23S rRNA and is also seen to make contacts with the A and possibly P site tRNAs. In Allorhizobium ampelinum (strain ATCC BAA-846 / DSM 112012 / S4) (Agrobacterium vitis (strain S4)), this protein is Large ribosomal subunit protein uL16.